The primary structure comprises 148 residues: General odorant-binding protein 69a (148 aa).

A signal peptide spans 1 to 23 (MVARHFSFFLALLILYDLIPSNQ). 3 disulfides stabilise this stretch: Cys42–Cys74, Cys70–Cys121, and Cys112–Cys130.

The protein belongs to the PBP/GOBP family. Expressed in the antenna, mostly on the anterior surface of the third antennal segment. Expressed in auxiliary cells and the third antennal segment and exported to the sensillar lymph (at protein level).

It is found in the secreted. Functionally, odorant-binding protein required for olfactory behavior and activity of pheromone-sensitive neurons in response to the male-specific pheromone cis-vaccenyl acetate (cVA). Modulates social responsivity differently in males and females, regulating male aggression and female receptivity respectively. The polypeptide is General odorant-binding protein 69a (Obp69a) (Drosophila melanogaster (Fruit fly)).